Here is a 290-residue protein sequence, read N- to C-terminus: Shikimate dehydrogenase (NADP(+)) (290 aa).

Shikimate is bound by residues Ser20–Ser22 and Thr67. Lys71 (proton acceptor) is an active-site residue. Shikimate is bound by residues Asn92 and Asp107. NADP(+) contacts are provided by residues Gly130–Ala134 and Leu227. Shikimate is bound at residue Tyr229. An NADP(+)-binding site is contributed by Gly250.

Belongs to the shikimate dehydrogenase family. Homodimer.

It catalyses the reaction shikimate + NADP(+) = 3-dehydroshikimate + NADPH + H(+). Its pathway is metabolic intermediate biosynthesis; chorismate biosynthesis; chorismate from D-erythrose 4-phosphate and phosphoenolpyruvate: step 4/7. Its function is as follows. Involved in the biosynthesis of the chorismate, which leads to the biosynthesis of aromatic amino acids. Catalyzes the reversible NADPH linked reduction of 3-dehydroshikimate (DHSA) to yield shikimate (SA). In Syntrophomonas wolfei subsp. wolfei (strain DSM 2245B / Goettingen), this protein is Shikimate dehydrogenase (NADP(+)).